A 353-amino-acid polypeptide reads, in one-letter code: Heterogeneous nuclear ribonucleoproteins A2/B1 (353 aa).

N-acetylmethionine is present on methionine 1. Threonine 4 carries the phosphothreonine modification. Residue leucine 5 forms a Glycyl lysine isopeptide (Lys-Gly) (interchain with G-Cter in SUMO2) linkage. The Nuclear localization signal signature appears at proline 9–arginine 15. RRM domains follow at residues arginine 21–lysine 104 and lysine 112–glutamine 191. A Glycyl lysine isopeptide (Lys-Gly) (interchain with G-Cter in SUMO2) cross-link involves residue lysine 22. Position 29 is a phosphoserine (serine 29). Arginine 38 carries the omega-N-methylarginine modification. Residue serine 85 is modified to Phosphoserine. Lysine 104 is subject to N6,N6-dimethyllysine; alternate. A Glycyl lysine isopeptide (Lys-Gly) (interchain with G-Cter in SUMO2); alternate cross-link involves residue lysine 104. Glycyl lysine isopeptide (Lys-Gly) (interchain with G-Cter in SUMO2) cross-links involve residues lysine 112, lysine 120, and lysine 137. Residue threonine 140 is modified to Phosphothreonine. Serine 149 is subject to Phosphoserine. A Glycyl lysine isopeptide (Lys-Gly) (interchain with G-Cter in SUMO2) cross-link involves residue lysine 152. Threonine 159 carries the phosphothreonine modification. Glycyl lysine isopeptide (Lys-Gly) (interchain with G-Cter in SUMO2); alternate cross-links involve residues lysine 168 and lysine 173. Lysine 168 and lysine 173 each carry N6-acetyllysine; alternate. Threonine 176 carries the phosphothreonine modification. Lysine 186 is covalently cross-linked (Glycyl lysine isopeptide (Lys-Gly) (interchain with G-Cter in SUMO2)). Phosphoserine occurs at positions 189 and 201. Positions methionine 193–tyrosine 353 are disordered. A compositionally biased stretch (gly residues) spans glycine 202–proline 223. An Asymmetric dimethylarginine; alternate modification is found at arginine 203. Position 203 is a dimethylated arginine; alternate (arginine 203). Omega-N-methylarginine; alternate is present on arginine 203. Serine 212 carries the post-translational modification Phosphoserine. Position 213 is an asymmetric dimethylarginine; alternate (arginine 213). Residue arginine 213 is modified to Dimethylated arginine; alternate. Arginine 213 is subject to Omega-N-methylarginine; alternate. Serine 225 is subject to Phosphoserine. The residue at position 228 (arginine 228) is an Omega-N-methylarginine. Residues serine 231 and serine 236 each carry the phosphoserine modification. Residue arginine 238 is modified to Omega-N-methylarginine. The residue at position 259 (serine 259) is a Phosphoserine. At arginine 266 the chain carries Asymmetric dimethylarginine; alternate. Omega-N-methylarginine; alternate is present on arginine 266. Residues glutamine 308–tyrosine 347 are nuclear targeting sequence. Gly residues predominate over residues asparagine 320–tyrosine 353. Serine 324 is modified (phosphoserine). Arginine 325 is modified (omega-N-methylarginine). The residue at position 331 (tyrosine 331) is a Phosphotyrosine. Phosphoserine is present on residues serine 341 and serine 344. The residue at position 347 (tyrosine 347) is a Phosphotyrosine. An Omega-N-methylarginine modification is found at arginine 350.

Homodimer; dimerization is required for nucleocytoplasmic translocation. Identified in the spliceosome C complex. Identified in a IGF2BP1-dependent mRNP granule complex containing untranslated mRNAs. Interacts with IGF2BP1. Interacts with C9orf72. Interacts with DGCR8. Interacts with TARDBP. Interacts with CKAP5. Interacts with TBK1. Interacts with STING1. Interacts with SRC. Interacts with PPIA/CYPA. Interacts (via C-terminus) with FAM76B; the interaction results in retention of HNRNPA2B1 in the nucleus and inhibition of the NF-kappa-B-mediated inflammatory pathway. Interacts with NF-kappa-B inhibitors NFKBIA and NFKBIE; the interaction may be mediated by the RRM2 domain of HNRNPA2B1, and HNRNPA2B1 may interact simultaneously with FAM76B and either NFKBIA or NFKBIE to form a complex. Sumoylated in exosomes, promoting miRNAs-binding. In terms of processing, asymmetric dimethylation at Arg-266 constitutes the major methylation site. According to a report, methylation affects subcellular location and promotes nuclear localization. According to another report, methylation at Arg-266 does not influence nucleocytoplasmic shuttling.

Its subcellular location is the nucleus. It is found in the nucleoplasm. It localises to the cytoplasm. The protein localises to the cytoplasmic granule. The protein resides in the secreted. Its subcellular location is the extracellular exosome. Heterogeneous nuclear ribonucleoprotein (hnRNP) that associates with nascent pre-mRNAs, packaging them into hnRNP particles. The hnRNP particle arrangement on nascent hnRNA is non-random and sequence-dependent and serves to condense and stabilize the transcripts and minimize tangling and knotting. Packaging plays a role in various processes such as transcription, pre-mRNA processing, RNA nuclear export, subcellular location, mRNA translation and stability of mature mRNAs. Forms hnRNP particles with at least 20 other different hnRNP and heterogeneous nuclear RNA in the nucleus. Involved in transport of specific mRNAs to the cytoplasm in oligodendrocytes and neurons: acts by specifically recognizing and binding the A2RE (21 nucleotide hnRNP A2 response element) or the A2RE11 (derivative 11 nucleotide oligonucleotide) sequence motifs present on some mRNAs, and promotes their transport to the cytoplasm. Specifically binds single-stranded telomeric DNA sequences, protecting telomeric DNA repeat against endonuclease digestion. Also binds other RNA molecules, such as primary miRNA (pri-miRNAs): acts as a nuclear 'reader' of the N6-methyladenosine (m6A) mark by specifically recognizing and binding a subset of nuclear m6A-containing pri-miRNAs. Binding to m6A-containing pri-miRNAs promotes pri-miRNA processing by enhancing binding of DGCR8 to pri-miRNA transcripts. Involved in miRNA sorting into exosomes following sumoylation, possibly by binding (m6A)-containing pre-miRNAs. Acts as a regulator of efficiency of mRNA splicing, possibly by binding to m6A-containing pre-mRNAs. Plays a role in the splicing of pyruvate kinase PKM by binding repressively to sequences flanking PKM exon 9, inhibiting exon 9 inclusion and resulting in exon 10 inclusion and production of the PKM M2 isoform. Also plays a role in the activation of the innate immune response. Mechanistically, senses the presence of viral DNA in the nucleus, homodimerizes and is demethylated by JMJD6. In turn, translocates to the cytoplasm where it activates the TBK1-IRF3 pathway, leading to interferon alpha/beta production. Functionally, (Microbial infection) Involved in the transport of HIV-1 genomic RNA out of the nucleus, to the microtubule organizing center (MTOC), and then from the MTOC to the cytoplasm: acts by specifically recognizing and binding the A2RE (21 nucleotide hnRNP A2 response element) sequence motifs present on HIV-1 genomic RNA, and promotes its transport. The sequence is that of Heterogeneous nuclear ribonucleoproteins A2/B1 (HNRNPA2B1) from Homo sapiens (Human).